The sequence spans 239 residues: Orotidine 5'-phosphate decarboxylase (239 aa).

Substrate-binding positions include aspartate 15, lysine 37, 64 to 73, threonine 126, arginine 187, glutamine 196, glycine 216, and arginine 217; that span reads DLKYHDIPNT. Catalysis depends on lysine 66, which acts as the Proton donor.

Belongs to the OMP decarboxylase family. Type 1 subfamily. Homodimer.

It catalyses the reaction orotidine 5'-phosphate + H(+) = UMP + CO2. The protein operates within pyrimidine metabolism; UMP biosynthesis via de novo pathway; UMP from orotate: step 2/2. Catalyzes the decarboxylation of orotidine 5'-monophosphate (OMP) to uridine 5'-monophosphate (UMP). This Geotalea daltonii (strain DSM 22248 / JCM 15807 / FRC-32) (Geobacter daltonii) protein is Orotidine 5'-phosphate decarboxylase.